A 203-amino-acid chain; its full sequence is ATP phosphoribosyltransferase (203 aa).

This sequence belongs to the ATP phosphoribosyltransferase family. Short subfamily. In terms of assembly, heteromultimer composed of HisG and HisZ subunits.

The protein localises to the cytoplasm. The catalysed reaction is 1-(5-phospho-beta-D-ribosyl)-ATP + diphosphate = 5-phospho-alpha-D-ribose 1-diphosphate + ATP. Its pathway is amino-acid biosynthesis; L-histidine biosynthesis; L-histidine from 5-phospho-alpha-D-ribose 1-diphosphate: step 1/9. In terms of biological role, catalyzes the condensation of ATP and 5-phosphoribose 1-diphosphate to form N'-(5'-phosphoribosyl)-ATP (PR-ATP). Has a crucial role in the pathway because the rate of histidine biosynthesis seems to be controlled primarily by regulation of HisG enzymatic activity. The protein is ATP phosphoribosyltransferase of Campylobacter fetus subsp. fetus (strain 82-40).